The primary structure comprises 221 residues: MVFVKMTDVYLMIVMLMGLGFSIELSNGHKFYVGGRDGWVLTPSEDYSHWSHRNRFQVNDTLYFKYVKGKDSVLEVSEKEYNTCNTTHPLTSLSDGDSLFLLSRSDPFFFVSGNSGSCLKGQKLAVTVMSTGHHSHTPRHPSPSPSPSASPVRKALLSPAPIPVHKALSSPAPTPGVDPSHSEVLAPAPGPAAAVRNLAGSVAPGVISLGLVLVIMISSMV.

The N-terminal stretch at 1-21 (MVFVKMTDVYLMIVMLMGLGF) is a signal peptide. Residues 29–130 (HKFYVGGRDG…GQKLAVTVMS (102 aa)) form the Phytocyanin domain. N-linked (GlcNAc...) asparagine glycans are attached at residues N59 and N85. C84 and C118 are disulfide-bonded. A disordered region spans residues 130–185 (STGHHSHTPRHPSPSPSPSASPVRKALLSPAPIPVHKALSSPAPTPGVDPSHSEVL). N197 carries the GPI-anchor amidated asparagine lipid modification. The propeptide at 198-221 (LAGSVAPGVISLGLVLVIMISSMV) is removed in mature form.

Belongs to the early nodulin-like (ENODL) family. As to expression, confined to flowers.

The protein resides in the cell membrane. In terms of biological role, may act as a carbohydrate transporter. In Arabidopsis thaliana (Mouse-ear cress), this protein is Early nodulin-like protein 4.